A 269-amino-acid chain; its full sequence is MSGCRVFIGRLNPAAREKDVERFFKGYGRIRDIDLKRGFGFVEFEDPRDADDAVYELDGKELCSERVTIEHARARSRGGRGRGRYSDRFSSRRPRNDRRNAPPVRTENRLIVENLSSRVSWQDLKDFMRQAGEVTFADAHRPKLNEGVVEFASYGDLKNAIEKLSGKEINGRKIKLIEGSKRHRSRSRSRSRTRSSSRSRSRSRSRRSKSYSRSRSRSRSRSKSRSGSRSPVPEKSQKRGSSSRSKSPASVDRQRSRSRSRSRSVDSGN.

The RRM 1 domain maps to 4–74 (CRVFIGRLNP…ERVTIEHARA (71 aa)). The tract at residues 73–105 (RARSRGGRGRGRYSDRFSSRRPRNDRRNAPPVR) is disordered. Residues 74-83 (ARSRGGRGRG) show a composition bias toward basic residues. Ser-86 carries the phosphoserine modification. Positions 108–189 (NRLIVENLSS…SKRHRSRSRS (82 aa)) constitute an RRM 2 domain. Lys-167 is subject to N6-acetyllysine. Residues 174 to 269 (IKLIEGSKRH…SRSRSVDSGN (96 aa)) are disordered. Positions 181–226 (KRHRSRSRSRSRTRSSSRSRSRSRSRRSKSYSRSRSRSRSRSKSRS) are enriched in basic residues. Phosphoserine occurs at positions 224, 226, 230, 247, and 250. The segment covering 239–251 (RGSSSRSKSPASV) has biased composition (low complexity).

This sequence belongs to the splicing factor SR family. As to quaternary structure, found in a pre-mRNA splicing complex with SRSF4/SFRS4, SRSF5/SFRS5, SNRNP70, SNRPA1, SRRM1 and SRRM2. Interacts with RBMY; the interaction inhibits SRSF5 pre-mRNA splicing. Interacts (via RS domain) with PHF5A (via N-terminus). In terms of processing, extensively phosphorylated on serine residues in the RS domain.

Its subcellular location is the nucleus. May be required for progression through G1 and entry into S phase of cell growth. May play a regulatory role in pre-mRNA splicing. Autoregulates its own expression. Plays a role in constitutive splicing and can modulate the selection of alternative splice sites. This is Serine/arginine-rich splicing factor 5 (Srsf5) from Mus musculus (Mouse).